A 157-amino-acid polypeptide reads, in one-letter code: Cyclic pyranopterin monophosphate synthase (157 aa).

Residues 74–76 (MCH) and 110–111 (ME) each bind substrate. Asp-125 is an active-site residue.

This sequence belongs to the MoaC family. In terms of assembly, homohexamer; trimer of dimers.

It catalyses the reaction (8S)-3',8-cyclo-7,8-dihydroguanosine 5'-triphosphate = cyclic pyranopterin phosphate + diphosphate. It functions in the pathway cofactor biosynthesis; molybdopterin biosynthesis. Catalyzes the conversion of (8S)-3',8-cyclo-7,8-dihydroguanosine 5'-triphosphate to cyclic pyranopterin monophosphate (cPMP). This Peptoclostridium acidaminophilum (Eubacterium acidaminophilum) protein is Cyclic pyranopterin monophosphate synthase.